The sequence spans 594 residues: Shugoshin (594 aa).

The stretch at 38-61 forms a coiled coil; sequence KITDMETKVSELVQENVSLRSRLS. Disordered stretches follow at residues 104 to 178, 201 to 266, 342 to 380, and 519 to 549; these read SGIH…KSSR, QLPI…TNKN, SKIK…RRTR, and TKQQ…RTKQ. Residues 220–240 are a coiled coil; that stretch reads EEESQENKHTKEEREDEGKEN. Basic and acidic residues predominate over residues 224-239; the sequence is QENKHTKEEREDEGKE. Residues 252–261 show a composition bias toward polar residues; the sequence is SVTNTGTECS. The span at 343–355 shows a compositional bias: basic residues; that stretch reads KIKHSMKHPRTKL. Residues 357–376 are compositionally biased toward basic and acidic residues; that stretch reads GGQDDIMPHTDYDKDDEKRE. Polar residues-rich tracts occupy residues 519–532 and 539–549; these read TKQQ…SDPN and NSNVKPTRTKQ.

It belongs to the shugoshin family.

It localises to the nucleus. It is found in the chromosome. The protein localises to the centromere. Functionally, plays a central role in chromosome cohesion during cell division by preventing premature dissociation of cohesin complex from centromeres after prophase, when most of cohesin complex dissociates from chromosomes arms. The polypeptide is Shugoshin (SGO1) (Kluyveromyces lactis (strain ATCC 8585 / CBS 2359 / DSM 70799 / NBRC 1267 / NRRL Y-1140 / WM37) (Yeast)).